We begin with the raw amino-acid sequence, 183 residues long: Large ribosomal subunit protein uL6 (183 aa).

It belongs to the universal ribosomal protein uL6 family. Part of the 50S ribosomal subunit.

Functionally, this protein binds to the 23S rRNA, and is important in its secondary structure. It is located near the subunit interface in the base of the L7/L12 stalk, and near the tRNA binding site of the peptidyltransferase center. This Chlamydia abortus (strain DSM 27085 / S26/3) (Chlamydophila abortus) protein is Large ribosomal subunit protein uL6.